The chain runs to 206 residues: LexA repressor (206 aa).

Residues 29–49 (VREICEAVGLRSTSTVHGHLA) constitute a DNA-binding region (H-T-H motif). Active-site for autocatalytic cleavage activity residues include serine 130 and lysine 167.

The protein belongs to the peptidase S24 family. In terms of assembly, homodimer.

The catalysed reaction is Hydrolysis of Ala-|-Gly bond in repressor LexA.. In terms of biological role, represses a number of genes involved in the response to DNA damage (SOS response), including recA and lexA. In the presence of single-stranded DNA, RecA interacts with LexA causing an autocatalytic cleavage which disrupts the DNA-binding part of LexA, leading to derepression of the SOS regulon and eventually DNA repair. This Alkaliphilus oremlandii (strain OhILAs) (Clostridium oremlandii (strain OhILAs)) protein is LexA repressor.